The primary structure comprises 259 residues: Small ribosomal subunit protein eS4 (259 aa).

Residues 41–105 form the S4 RNA-binding domain; it reads LPLSVLLKER…TDQSFRILYD (65 aa). Position 248 is a phosphothreonine (T248). Phosphoserine is present on S258.

Belongs to the eukaryotic ribosomal protein eS4 family.

In Tetrahymena thermophila, this protein is Small ribosomal subunit protein eS4.